A 157-amino-acid chain; its full sequence is Probable succinate transporter subunit YjjB (157 aa).

4 helical membrane passes run 8-28 (LALA…AMVF), 50-70 (MILM…SMLV), 87-107 (VFTV…TAMI), and 129-149 (FLTA…PGLW).

Belongs to the ThrE exporter (TC 2.A.79) family. In terms of assembly, the transporter is composed of YjjB and YjjP.

The protein localises to the cell inner membrane. Its function is as follows. Involved in succinate export with YjjP. Both proteins are required for export. This chain is Probable succinate transporter subunit YjjB, found in Escherichia coli O127:H6 (strain E2348/69 / EPEC).